Consider the following 339-residue polypeptide: Anthranilate phosphoribosyltransferase (339 aa).

5-phospho-alpha-D-ribose 1-diphosphate-binding positions include Gly-81, 84–85 (GD), Ser-89, 91–94 (NVSS), 109–117 (KHGNRALSS), and Ala-121. Gly-81 is a binding site for anthranilate. Ser-93 is a binding site for Mg(2+). Position 112 (Asn-112) interacts with anthranilate. Anthranilate is bound at residue Arg-167. Mg(2+) contacts are provided by Asp-225 and Glu-226.

This sequence belongs to the anthranilate phosphoribosyltransferase family. In terms of assembly, homodimer. It depends on Mg(2+) as a cofactor.

It catalyses the reaction N-(5-phospho-beta-D-ribosyl)anthranilate + diphosphate = 5-phospho-alpha-D-ribose 1-diphosphate + anthranilate. It functions in the pathway amino-acid biosynthesis; L-tryptophan biosynthesis; L-tryptophan from chorismate: step 2/5. In terms of biological role, catalyzes the transfer of the phosphoribosyl group of 5-phosphorylribose-1-pyrophosphate (PRPP) to anthranilate to yield N-(5'-phosphoribosyl)-anthranilate (PRA). This is Anthranilate phosphoribosyltransferase from Brucella canis (strain ATCC 23365 / NCTC 10854 / RM-666).